The chain runs to 148 residues: F420H(2)-dependent quinone reductase MT1609 (148 aa).

Coenzyme F420-(gamma-Glu)n contacts are provided by residues A46–T48, R52–M57, V68–L71, V79–N83, and Y125.

The protein belongs to the F420H(2)-dependent quinone reductase family.

It localises to the cell membrane. It catalyses the reaction oxidized coenzyme F420-(gamma-L-Glu)(n) + a quinol + H(+) = reduced coenzyme F420-(gamma-L-Glu)(n) + a quinone. Its function is as follows. Involved in a F420-dependent anti-oxidant mechanism that protects M.tuberculosis against oxidative stress and bactericidal agents. Catalyzes the F420H(2)-dependent two-electron reduction of quinones to dihydroquinones, thereby preventing the formation of cytotoxic semiquinones obtained by the one-electron reduction pathway. In vitro, catalyzes the reduction of menadione to menadiol; since menaquinone is the sole quinone electron carrier in the respiratory chain in M.tuberculosis, the physiological electron acceptor for Fqr-mediated F420H(2) oxidation is therefore likely to be the endogenous menaquinone found in the membrane fraction of M.tuberculosis. The chain is F420H(2)-dependent quinone reductase MT1609 from Mycobacterium tuberculosis (strain CDC 1551 / Oshkosh).